Consider the following 433-residue polypeptide: Serine hydroxymethyltransferase (433 aa).

(6S)-5,6,7,8-tetrahydrofolate is bound by residues Leu-132 and 136–138 (GHL). N6-(pyridoxal phosphate)lysine is present on Lys-241.

It belongs to the SHMT family. In terms of assembly, homodimer. The cofactor is pyridoxal 5'-phosphate.

The protein resides in the cytoplasm. The catalysed reaction is (6R)-5,10-methylene-5,6,7,8-tetrahydrofolate + glycine + H2O = (6S)-5,6,7,8-tetrahydrofolate + L-serine. It functions in the pathway one-carbon metabolism; tetrahydrofolate interconversion. It participates in amino-acid biosynthesis; glycine biosynthesis; glycine from L-serine: step 1/1. In terms of biological role, catalyzes the reversible interconversion of serine and glycine with tetrahydrofolate (THF) serving as the one-carbon carrier. This reaction serves as the major source of one-carbon groups required for the biosynthesis of purines, thymidylate, methionine, and other important biomolecules. Also exhibits THF-independent aldolase activity toward beta-hydroxyamino acids, producing glycine and aldehydes, via a retro-aldol mechanism. This is Serine hydroxymethyltransferase from Rhodopseudomonas palustris (strain BisA53).